A 296-amino-acid chain; its full sequence is Nucleotide-binding protein M6_Spy0559 (296 aa).

13–20 (GMSGAGKT) provides a ligand contact to ATP. A GTP-binding site is contributed by 63–66 (DMRS).

It belongs to the RapZ-like family.

In terms of biological role, displays ATPase and GTPase activities. In Streptococcus pyogenes serotype M6 (strain ATCC BAA-946 / MGAS10394), this protein is Nucleotide-binding protein M6_Spy0559.